The primary structure comprises 163 residues: CASP-like protein 1C2 (163 aa).

Topologically, residues 1–6 (MAKSNK) are cytoplasmic. Residues 7–27 (IFTNTLRLLALAATVVAIVFM) traverse the membrane as a helical segment. At 28 to 52 (VTSHDSAQVLNLTFTAKYSNTPAFK) the chain is on the extracellular side. Asn-38 carries N-linked (GlcNAc...) asparagine glycosylation. Residues 53–73 (FLVIGEAIAGGYTVISILLSF) traverse the membrane as a helical segment. The Cytoplasmic segment spans residues 74 to 79 (KGLFWR). The chain crosses the membrane as a helical span at residues 80–100 (LIVILDMVTTVLLTSSISAAL). Residues 101–128 (AIAQVGKKGNTHAGWLPICGQVPDFCDY) are Extracellular-facing. Residues 129 to 149 (VTIALIAGFAAAIIYFVLLLC) traverse the membrane as a helical segment. Residues 150–163 (SLYVVLSPIFVATP) lie on the Cytoplasmic side of the membrane.

It belongs to the Casparian strip membrane proteins (CASP) family. In terms of assembly, homodimer and heterodimers.

It is found in the cell membrane. The chain is CASP-like protein 1C2 from Populus trichocarpa (Western balsam poplar).